Reading from the N-terminus, the 222-residue chain is GMP/IMP nucleotidase YrfG (222 aa).

The active-site Nucleophile is D9. Residues D9 and D11 each coordinate Mg(2+). Substrate-binding positions include 9–11 and K149; that span reads DVD. Position 174 (D174) interacts with Mg(2+).

Belongs to the HAD-like hydrolase superfamily. Mg(2+) is required as a cofactor. It depends on Mn(2+) as a cofactor. The cofactor is Co(2+). Zn(2+) serves as cofactor.

It carries out the reaction a ribonucleoside 5'-phosphate + H2O = a ribonucleoside + phosphate. Its function is as follows. Catalyzes the dephosphorylation of different purine nucleotides (GMP and IMP). Also hydrolyzes flavin mononucleotide (FMN). In Escherichia coli (strain K12), this protein is GMP/IMP nucleotidase YrfG (yrfG).